The chain runs to 777 residues: Biotin sulfoxide reductase (777 aa).

Mo-bis(molybdopterin guanine dinucleotide) is bound at residue Ser-148.

The protein belongs to the prokaryotic molybdopterin-containing oxidoreductase family. It depends on Mo-bis(molybdopterin guanine dinucleotide) as a cofactor.

It carries out the reaction [thioredoxin]-disulfide + L-methionine + H2O = L-methionine (S)-S-oxide + [thioredoxin]-dithiol. This enzyme may serve as a scavenger, allowing the cell to utilize biotin sulfoxide as a biotin source. It reduces a spontaneous oxidation product of biotin, D-biotin D-sulfoxide (BSO or BDS), back to biotin. Also exhibits methionine-(S)-sulfoxide (Met-S-SO) reductase activity, acting specifically on the (S) enantiomer in the free, but not the protein-bound form. It thus plays a role in assimilation of oxidized methionines. The protein is Biotin sulfoxide reductase (bisC) of Escherichia coli (strain K12).